Consider the following 845-residue polypeptide: ATP-binding cassette sub-family F member 1 (845 aa).

A disordered region spans residues 1–261 (MPKAPKQQPP…HLSKKEKKKL (261 aa)). Phosphoserine occurs at positions 22 and 24. A compositionally biased stretch (basic residues) spans 29–39 (KKGKKDKKIKK). Positions 47 to 64 (VEDKQAGEEEKVLKEKEQ) are enriched in basic and acidic residues. Residues 73–85 (QKKKRDTRKGRRK) are compositionally biased toward basic residues. S105 carries the post-translational modification Phosphoserine. Residue T108 is modified to Phosphothreonine. A phosphoserine; by CK2 mark is found at S109 and S140. Residues 147–160 (EKHPPKPAKPEKNR) are compositionally biased toward basic and acidic residues. S166 is modified (phosphoserine). Basic and acidic residues predominate over residues 206 to 226 (EIIKEKEPPKQGKEKAKKAEQ). Acidic residues predominate over residues 227-241 (GSEEEGEGEEEEEEG). S228 is modified (phosphoserine). One can recognise an ABC transporter 1 domain in the interval 304 to 548 (IKLEKFSISA…MYQQKQKELL (245 aa)). Residue 336-343 (GPNGKGKT) coordinates ATP. A compositionally biased stretch (basic and acidic residues) spans 559–580 (KELKAGGKSTKQAEKQTKEALT). The disordered stretch occupies residues 559–602 (KELKAGGKSTKQAEKQTKEALTRKQQKCRRKNQDEESQEAPELL). A Phosphoserine modification is found at S595. Residues 625 to 840 (LGLHGVTFGY…VLEALGEVMV (216 aa)) enclose the ABC transporter 2 domain. 658–665 (GPNGVGKS) is a binding site for ATP.

It belongs to the ABC transporter superfamily. ABCF family. EF3 subfamily. In terms of assembly, isoform 2 interacts (via N-terminus) with EIF2S1; the interaction is independent of its phosphorylated status. Isoform 2 associates (via both ABC transporter domains) with the ribosomes. Isoform 2 is phosphorylated at phosphoserine and phosphothreonine. Isoform 2 phosphorylation on Ser-109 and Ser-140 by CK2 inhibits association of EIF2 with ribosomes. As to expression, ubiquitous.

It is found in the cytoplasm. The protein resides in the nucleus. Its subcellular location is the nucleoplasm. It localises to the nucleus envelope. Functionally, isoform 2 is required for efficient Cap- and IRES-mediated mRNA translation initiation. Isoform 2 is not involved in the ribosome biogenesis. The sequence is that of ATP-binding cassette sub-family F member 1 (ABCF1) from Homo sapiens (Human).